The chain runs to 528 residues: Probable rhamnogalacturonate lyase A (528 aa).

Residues 1-20 (MLSKATLLLFLPSWARVTYA) form the signal peptide. Asn-46 carries N-linked (GlcNAc...) asparagine glycosylation. A disulfide bridge links Cys-50 with Cys-93. Asn-148 is a glycosylation site (N-linked (GlcNAc...) asparagine). A disulfide bond links Cys-184 and Cys-193. The N-linked (GlcNAc...) asparagine glycan is linked to Asn-351.

This sequence belongs to the polysaccharide lyase 4 family.

The protein resides in the secreted. The catalysed reaction is Endotype eliminative cleavage of L-alpha-rhamnopyranosyl-(1-&gt;4)-alpha-D-galactopyranosyluronic acid bonds of rhamnogalacturonan I domains in ramified hairy regions of pectin leaving L-rhamnopyranose at the reducing end and 4-deoxy-4,5-unsaturated D-galactopyranosyluronic acid at the non-reducing end.. Functionally, pectinolytic enzymes consist of four classes of enzymes: pectin lyase, polygalacturonase, pectin methylesterase and rhamnogalacturonase. Degrades the rhamnogalacturonan I (RG-I) backbone of pectin. This chain is Probable rhamnogalacturonate lyase A (rglA), found in Aspergillus fumigatus (strain CBS 144.89 / FGSC A1163 / CEA10) (Neosartorya fumigata).